We begin with the raw amino-acid sequence, 230 residues long: Intracellular hyphae protein 1 (230 aa).

The N-terminal stretch at 1–18 is a signal peptide; sequence MQTSFVALLAVAASLASA. Residues 20-102 form a disordered region; that stretch reads PHGGNSYEAS…KNNTLPVPTC (83 aa). 10 repeat units span residues 30 to 33, 36 to 39, 42 to 45, 46 to 49, 50 to 53, 57 to 60, 65 to 68, 76 to 79, 80 to 83, and 84 to 87. The segment at 30–87 is 5 X 4 AA repeats of L-P-E-P; that stretch reads LPEPTNLPEPTKLPEPVEGPYKPKPPILPEPIKDNYKPKTPILPEHVEGPYKPKLPEP. Residues 46–87 form a 2 X 4 AA repeats of V-E-G-P region; the sequence is VEGPYKPKPPILPEPIKDNYKPKTPILPEHVEGPYKPKLPEP. Residues 50-83 are 3 X 4 AA repeats of Y-K-P-K; the sequence is YKPKPPILPEPIKDNYKPKTPILPEHVEGPYKPK. A compositionally biased stretch (basic and acidic residues) spans 74 to 84; the sequence is EHVEGPYKPKL. N-linked (GlcNAc...) asparagine glycosylation occurs at Asn94. The 45-residue stretch at 108 to 152 folds into the LysM 1 domain; sequence KTHKVKSGESLTTIAEKYDTGICNIAKLNNLADPNFVDLNQDLQI. N-linked (GlcNAc...) asparagine glycosylation occurs at Asn161. The LysM 2 domain maps to 183–227; it reads DIYSVVSGDTLTSIAQALQITLQSLKDANPGVVPEHLNVGQKLNV.

Forms a multimeric structure. Post-translationally, N-glycosylated and may be O-glycosylated. Expressed in penetration hyphae, infection vesicles and primary hyphae (intracellular hyphae).

Its subcellular location is the secreted. The protein resides in the cell wall. May have roles in host-pathogen interaction, including establishment and maintenance of biotrophy, prevention of host recognition of the fungus and a barrier to host defense molecules. The protein is Intracellular hyphae protein 1 (CIH1) of Colletotrichum lindemuthianum (Bean anthracnose fungus).